Consider the following 387-residue polypeptide: MIAPRLSMPAIVNAQSLVAKLRQLNCEKNYCHPNNLPGFTASAFYKESSSPLDQLVQTARLCHWLLSQLGISVQGVSEFDDPIAISTDLLVACKDIVNVANIPPHRIRMGYGDDLTALVLGIADACLAKLQPNIVSWKSLGSENANAGVERDNDDDDAPILDDLIVDDALIGTMTAKKGTFTTAAGLATGSLTTDSGCIAPGLISEADWEQELMAVDSQLGGKQLGGVYAGQDWRKDVVSMSLLAKALSKETGSCAQSISGLVTDFGKQLERISTREQHLNSQVGQYSAKLGDANRTHAGVTEELAELSQSISALTGELSTINEKLRALKVELQVESARASDTSNIHIVKTAFSSLSGEIRQLDLRITLAQQRLFSIAPPEPNTVRI.

It belongs to the IFT57 family.

It localises to the cell projection. The protein resides in the cilium. It is found in the flagellum. The protein localises to the cytoplasm. Its subcellular location is the cytoskeleton. It localises to the flagellum axoneme. The protein resides in the flagellum basal body. Component of the intraflagellar transport complex B (IFT-B) involved in flagellar assembly. The sequence is that of Intraflagellar transport protein 57 from Giardia intestinalis (strain ATCC 50803 / WB clone C6) (Giardia lamblia).